Consider the following 275-residue polypeptide: Centromere protein V (275 aa).

Low complexity-rich tracts occupy residues 1–10 (MRRSRSSAAA) and 17–51 (RSGASGASAAPAASAAAALAPSATRTRRSASQAGS). Positions 1-109 (MRRSRSSAAA…ATPTSSASNL (109 aa)) are disordered. Ser-18 and Ser-21 each carry phosphoserine. Arg-43 is modified (omega-N-methylarginine). Positions 79–100 (GEPPPPELALLPPPPPPPPTPA) are enriched in pro residues. Phosphothreonine occurs at positions 98, 101, and 103. In terms of domain architecture, CENP-V/GFA spans 148–260 (HTGGCHCGAV…TEEFNGSDWE (113 aa)). Zn(2+) is bound by residues Cys-152, Cys-154, Cys-172, Cys-174, Cys-177, Cys-216, and Cys-219. Ser-257 carries the phosphoserine modification.

It belongs to the Gfa family. Zn(2+) serves as cofactor.

The protein localises to the chromosome. It is found in the centromere. It localises to the kinetochore. Its subcellular location is the nucleus. The protein resides in the cytoplasm. The protein localises to the cytoskeleton. It is found in the spindle. Its function is as follows. Required for distribution of pericentromeric heterochromatin in interphase nuclei and for centromere formation and organization, chromosome alignment and cytokinesis. The polypeptide is Centromere protein V (CENPV) (Homo sapiens (Human)).